Consider the following 246-residue polypeptide: Peroxisomal membrane protein 11A (246 aa).

At 1 to 93 the chain is on the cytoplasmic side; the sequence is MDAFIRVANQ…LCLTLANLNR (93 aa). Residues 94–114 traverse the membrane as a helical segment; that stretch reads VVYYICDTVLWAKSVGLTSGI. Over 115–217 the chain is Lumenal; the sequence is NREKWQMRAA…LNQLGIYKSN (103 aa). A helical transmembrane segment spans residues 218-238; sequence LGVVGFGGLVSSVAGLITVVY. The interval 218–238 is required for homodimerization, interaction with PEX11G, and peroxisomal localization; the sequence is LGVVGFGGLVSSVAGLITVVY. Residues 239 to 246 are Cytoplasmic-facing; sequence PQLKLKAR.

It belongs to the peroxin-11 family. As to quaternary structure, homodimer. Heterodimer with PEX11G. Probably interacts with COPB2 and COPA. Interacts with PEX19. Interacts with FIS1. Expressed at high levels in kidney, liver, lung, brain, and testis and at low levels in heart, spleen and skeletal muscle.

Its subcellular location is the peroxisome membrane. Functionally, may be involved in peroxisomal proliferation and may regulate peroxisomes division. May mediate binding of coatomer proteins to the peroxisomal membrane. Promotes membrane protrusion and elongation on the peroxisomal surface. The sequence is that of Peroxisomal membrane protein 11A (Pex11a) from Rattus norvegicus (Rat).